A 173-amino-acid chain; its full sequence is Translation initiation factor IF-3 (173 aa).

The protein belongs to the IF-3 family. As to quaternary structure, monomer.

The protein localises to the cytoplasm. IF-3 binds to the 30S ribosomal subunit and shifts the equilibrium between 70S ribosomes and their 50S and 30S subunits in favor of the free subunits, thus enhancing the availability of 30S subunits on which protein synthesis initiation begins. This Ehrlichia chaffeensis (strain ATCC CRL-10679 / Arkansas) protein is Translation initiation factor IF-3.